Here is a 437-residue protein sequence, read N- to C-terminus: Inactive peptidyl-prolyl cis-trans isomerase shutdown (437 aa).

One can recognise a PPIase FKBP-type domain in the interval 92 to 178 (DSEVTIHYAA…RPEPALFVIV (87 aa)). 3 TPR repeats span residues 209–242 (VNAL…LRLS), 258–294 (VNAY…EKHC), and 295–327 (KALY…EPKN).

Belongs to the FKBP6 family. Interacts with Hsp83.

Its subcellular location is the cytoplasm. In terms of biological role, co-chaperone required during oogenesis to repress transposable elements and prevent their mobilization, which is essential for the germline integrity. Acts via the piRNA metabolic process, which mediates the repression of transposable elements during meiosis by forming complexes composed of piRNAs and Piwi proteins and govern the methylation and subsequent repression of transposons. Acts as a co-chaperone via its interaction with Hsp83/HSP90 and is required for the biogenesis of all three piRNA major populations. This Bombyx mori (Silk moth) protein is Inactive peptidyl-prolyl cis-trans isomerase shutdown (shu).